Here is a 98-residue protein sequence, read N- to C-terminus: Venom toxin OcyC11 (98 aa).

The signal sequence occupies residues 1-20; that stretch reads MKIACTLVLFVMLRCYVNAR.

In terms of processing, contains 4 disulfide bonds. In terms of tissue distribution, expressed by the venom gland.

The protein resides in the secreted. The chain is Venom toxin OcyC11 from Opisthacanthus cayaporum (South American scorpion).